A 740-amino-acid polypeptide reads, in one-letter code: Alpha-1,6-mannosylglycoprotein 6-beta-N-acetylglucosaminyltransferase A (740 aa).

Over 1–13 (MAFFSPWKLSSQK) the chain is Cytoplasmic. A helical; Signal-anchor for type II membrane protein membrane pass occupies residues 14–30 (LGFFLVTFGFIWGMMLL). Residues 31–740 (HFTIQQRTQP…GQVALCKDCL (710 aa)) are Lumenal-facing. N-linked (GlcNAc...) asparagine glycosylation is found at asparagine 109, asparagine 114, and asparagine 117. 9 disulfides stabilise this stretch: cysteine 144–cysteine 182, cysteine 155–cysteine 195, cysteine 171–cysteine 337, cysteine 371–cysteine 625, cysteine 648–cysteine 723, cysteine 652–cysteine 725, cysteine 659–cysteine 712, cysteine 680–cysteine 701, and cysteine 736–cysteine 739. The tract at residues 212–740 (NSLAEIRTDF…GQVALCKDCL (529 aa)) is sufficient for catalytic activity. Asparagine 333 is a glycosylation site (N-linked (GlcNAc...) asparagine). 377-378 (DS) serves as a coordination point for substrate. 2 N-linked (GlcNAc...) asparagine glycosylation sites follow: asparagine 432 and asparagine 446. Glutamate 525 lines the UDP-N-acetyl-alpha-D-glucosamine pocket. A substrate-binding site is contributed by lysine 553.

Belongs to the glycosyltransferase 18 family. Post-translationally, N-glycosylated. In terms of processing, a secreted form is released from the membrane after cleavage by gamma-secretase. In terms of tissue distribution, detected in cerebellum.

The protein resides in the golgi apparatus membrane. It is found in the perikaryon. Its subcellular location is the secreted. It carries out the reaction N(4)-{beta-D-GlcNAc-(1-&gt;2)-[beta-D-GlcNAc-(1-&gt;4)]-alpha-D-Man-(1-&gt;3)-[beta-D-GlcNAc-(1-&gt;2)-alpha-D-Man-(1-&gt;6)]-beta-D-Man-(1-&gt;4)-beta-D-GlcNAc-(1-&gt;4)-beta-D-GlcNAc}-L-asparaginyl-[protein] + UDP-N-acetyl-alpha-D-glucosamine = N(4)-{beta-D-GlcNAc-(1-&gt;2)-[beta-D-GlcNAc-(1-&gt;4)]-alpha-D-Man-(1-&gt;3)-[beta-D-GlcNAc-(1-&gt;2)-[beta-D-GlcNAc-(1-&gt;6)]-alpha-D-Man-(1-&gt;6)]-beta-D-Man-(1-&gt;4)-beta-D-GlcNAc-(1-&gt;4)-beta-D-GlcNAc}-L-asparaginyl-[protein] + UDP + H(+). Its pathway is protein modification; protein glycosylation. Functionally, catalyzes the addition of N-acetylglucosamine (GlcNAc) in beta 1-6 linkage to the alpha-linked mannose of biantennary N-linked oligosaccharides. Catalyzes an important step in the biosynthesis of branched, complex-type N-glycans, such as those found on EGFR, TGFR (TGF-beta receptor) and CDH2. Via its role in the biosynthesis of complex N-glycans, plays an important role in the activation of cellular signaling pathways, reorganization of the actin cytoskeleton, cell-cell adhesion and cell migration. MGAT5-dependent EGFR N-glycosylation enhances the interaction between EGFR and LGALS3 and thereby prevents rapid EGFR endocytosis and prolongs EGFR signaling. Required for efficient interaction between TGFB1 and its receptor. Enhances activation of intracellular signaling pathways by several types of growth factors, including FGF2, PDGF, IGF, TGFB1 and EGF. MGAT5-dependent CDH2 N-glycosylation inhibits CDH2-mediated homotypic cell-cell adhesion and contributes to the regulation of downstream signaling pathways. Promotes cell migration. Contributes to the regulation of the inflammatory response. MGAT5-dependent TCR N-glycosylation enhances the interaction between TCR and LGALS3, limits agonist-induced TCR clustering, and thereby dampens TCR-mediated responses to antigens. Required for normal leukocyte evasation and accumulation at sites of inflammation. Inhibits attachment of monocytes to the vascular endothelium and subsequent monocyte diapedesis. Promotes proliferation of umbilical vein endothelial cells and angiogenesis, at least in part by promoting the release of the growth factor FGF2 from the extracellular matrix. This is Alpha-1,6-mannosylglycoprotein 6-beta-N-acetylglucosaminyltransferase A (Mgat5) from Mus musculus (Mouse).